A 65-amino-acid polypeptide reads, in one-letter code: Large ribosomal subunit protein uL29 (65 aa).

This sequence belongs to the universal ribosomal protein uL29 family.

The polypeptide is Large ribosomal subunit protein uL29 (Hyphomonas neptunium (strain ATCC 15444)).